A 792-amino-acid chain; its full sequence is Genome polyprotein (792 aa).

Positions 1–15 are interaction with host EXOC1; it reads MNNQRKKTGNPSFNM. The Cytoplasmic segment spans residues 1–101; that stretch reads MNNQRKKTGN…LNIMNRRRRS (101 aa). Residues 37 to 72 are hydrophobic; homodimerization of capsid protein C; the sequence is LLSGQGPMKLVMAFVAFLRFLAIPPTAGILKRWGSF. The propeptide at 101–114 is ER anchor for the capsid protein C, removed in mature form by serine protease NS3; sequence SVTMILMLLPTALA. The helical transmembrane segment at 102 to 119 threads the bilayer; the sequence is VTMILMLLPTALAFHLTT. The Extracellular portion of the chain corresponds to 120–242; that stretch reads RGGEPTLIVS…QIQKVETWAL (123 aa). Asn183 carries an N-linked (GlcNAc...) asparagine; by host glycan. A helical transmembrane segment spans residues 243–260; it reads RHPGFTVIGLFLAHAIGT. Residue Ser261 is a topological domain, cytoplasmic. The chain crosses the membrane as a helical span at residues 262 to 280; it reads ITQKGIIFILLMLVTPSMA. The Extracellular portion of the chain corresponds to 281–725; it reads MRCVGIGNRD…IHQIFGTAYG (445 aa). Cystine bridges form between Cys283–Cys310, Cys340–Cys401, Cys354–Cys385, and Cys372–Cys396. N-linked (GlcNAc...) asparagine; by host glycosylation occurs at Asn347. The segment at 378 to 391 is fusion peptide; the sequence is DRGWGNGCGLFGKG. Asn433 carries N-linked (GlcNAc...) asparagine; by host glycosylation. Cystine bridges form between Cys465/Cys565 and Cys582/Cys613. The chain crosses the membrane as a helical span at residues 726-746; sequence VLFSGVSWTMKIGIGILLTWL. Topologically, residues 747 to 752 are cytoplasmic; it reads GLNSRS. The helical transmembrane segment at 753–775 threads the bilayer; that stretch reads TSLSMTCIAVGMVTLYLGVMVQA. The Extracellular portion of the chain corresponds to 776-792; that stretch reads DSGCVINWKGKELKCGS. A disulfide bridge connects residues Cys779 and Cys790.

Homodimer. Interacts (via N-terminus) with host EXOC1 (via C-terminus); this interaction results in EXOC1 degradation through the proteasome degradation pathway. As to quaternary structure, forms heterodimers with envelope protein E in the endoplasmic reticulum and Golgi. In terms of assembly, homodimer; in the endoplasmic reticulum and Golgi. Interacts with protein prM. Interacts with non-structural protein 1. Homodimer; Homohexamer when secreted. Interacts with envelope protein E. In terms of processing, specific enzymatic cleavages in vivo yield mature proteins. Cleavages in the lumen of endoplasmic reticulum are performed by host signal peptidase, wereas cleavages in the cytoplasmic side are performed by serine protease NS3. Signal cleavage at the 2K-4B site requires a prior NS3 protease-mediated cleavage at the 4A-2K site. Post-translationally, N-glycosylated. N-glycosylated. The excreted form is glycosylated and this is required for efficient secretion of the protein from infected cells.

The protein localises to the virion. The protein resides in the host nucleus. It is found in the host cytoplasm. It localises to the host perinuclear region. Its subcellular location is the secreted. The protein localises to the virion membrane. The protein resides in the host endoplasmic reticulum membrane. Its function is as follows. Plays a role in virus budding by binding to the cell membrane and gathering the viral RNA into a nucleocapsid that forms the core of a mature virus particle. During virus entry, may induce genome penetration into the host cytoplasm after hemifusion induced by the surface proteins. Can migrate to the cell nucleus where it modulates host functions. Overcomes the anti-viral effects of host EXOC1 by sequestering and degrading the latter through the proteasome degradation pathway. Functionally, inhibits RNA silencing by interfering with host Dicer. In terms of biological role, prevents premature fusion activity of envelope proteins in trans-Golgi by binding to envelope protein E at pH6.0. After virion release in extracellular space, gets dissociated from E dimers. Acts as a chaperone for envelope protein E during intracellular virion assembly by masking and inactivating envelope protein E fusion peptide. prM is the only viral peptide matured by host furin in the trans-Golgi network probably to avoid catastrophic activation of the viral fusion activity in acidic Golgi compartment prior to virion release. prM-E cleavage is inefficient, and many virions are only partially matured. These uncleaved prM would play a role in immune evasion. Its function is as follows. May play a role in virus budding. Exerts cytotoxic effects by activating a mitochondrial apoptotic pathway through M ectodomain. May display a viroporin activity. Functionally, binds to host cell surface receptor and mediates fusion between viral and cellular membranes. Envelope protein is synthesized in the endoplasmic reticulum in the form of heterodimer with protein prM. They play a role in virion budding in the ER, and the newly formed immature particle is covered with 60 spikes composed of heterodimer between precursor prM and envelope protein E. The virion is transported to the Golgi apparatus where the low pH causes dissociation of PrM-E heterodimers and formation of E homodimers. prM-E cleavage is inefficient, and many virions are only partially matured. These uncleaved prM would play a role in immune evasion. In terms of biological role, involved in immune evasion, pathogenesis and viral replication. Once cleaved off the polyprotein, is targeted to three destinations: the viral replication cycle, the plasma membrane and the extracellular compartment. Essential for viral replication. Required for formation of the replication complex and recruitment of other non-structural proteins to the ER-derived membrane structures. Excreted as a hexameric lipoparticle that plays a role against host immune response. Antagonizing the complement function. Binds to the host macrophages and dendritic cells. Inhibits signal transduction originating from Toll-like receptor 3 (TLR3). Disrupts the host endothelial glycocalyx layer of host pulmonary microvascular endothelial cells, inducing degradation of sialic acid and shedding of heparan sulfate proteoglycans. NS1 induces expression of sialidases, heparanase, and activates cathepsin L, which activates heparanase via enzymatic cleavage. These effects are probably linked to the endothelial hyperpermeability observed in severe dengue disease. The protein is Genome polyprotein of Aedes aegypti (Yellowfever mosquito).